The chain runs to 269 residues: Diadenylate cyclase (269 aa).

A DAC domain is found at 109–266; it reads RSGIYDLFAN…GGKMILEIDP (158 aa).

The protein belongs to the adenylate cyclase family. DacZ subfamily. It depends on Mn(2+) as a cofactor.

It carries out the reaction 2 ATP = 3',3'-c-di-AMP + 2 diphosphate. Functionally, diadenylate cyclase that catalyzes the condensation of 2 ATP molecules into cyclic di-AMP (c-di-AMP). c-di-AMP is a second messenger for intracellular signal transduction involved in the control of important regulatory processes such as osmoregulation. Is essential for H.volcanii. Overexpression of DacZ leads to cell death, suggesting the need for tight regulation of c-di-AMP levels. Cannot use GTP as substrate. The sequence is that of Diadenylate cyclase from Haloferax volcanii (strain ATCC 29605 / DSM 3757 / JCM 8879 / NBRC 14742 / NCIMB 2012 / VKM B-1768 / DS2) (Halobacterium volcanii).